The following is a 380-amino-acid chain: mRNA cap guanine-N(7) methyltransferase (380 aa).

An mRNA cap 0 methyltransferase domain is found at 24–333 (SRIFFMRNMN…MYLVFGFRKK (310 aa)). 33 to 34 (NN) is a binding site for mRNA. K37, A62, D84, D117, Q139, and Y144 together coordinate S-adenosyl-L-methionine. The segment at 336-380 (EAEKTEEEPATTKPVAESESEQKEVTESEEKEDQEDCEHQEAQTN) is disordered.

The protein belongs to the class I-like SAM-binding methyltransferase superfamily. mRNA cap 0 methyltransferase family.

The protein localises to the nucleus. It catalyses the reaction a 5'-end (5'-triphosphoguanosine)-ribonucleoside in mRNA + S-adenosyl-L-methionine = a 5'-end (N(7)-methyl 5'-triphosphoguanosine)-ribonucleoside in mRNA + S-adenosyl-L-homocysteine. Functionally, mRNA-capping methyltransferase that methylates the N7 position of the added guanosine to the 5'-cap structure of mRNAs. Binds RNA containing 5'-terminal GpppC. This chain is mRNA cap guanine-N(7) methyltransferase (tag-72), found in Caenorhabditis elegans.